The following is a 282-amino-acid chain: Bis(5'-nucleosyl)-tetraphosphatase, symmetrical (282 aa).

This sequence belongs to the Ap4A hydrolase family.

The catalysed reaction is P(1),P(4)-bis(5'-adenosyl) tetraphosphate + H2O = 2 ADP + 2 H(+). In terms of biological role, hydrolyzes diadenosine 5',5'''-P1,P4-tetraphosphate to yield ADP. In Salmonella paratyphi A (strain ATCC 9150 / SARB42), this protein is Bis(5'-nucleosyl)-tetraphosphatase, symmetrical.